A 476-amino-acid polypeptide reads, in one-letter code: Sulfate adenylyltransferase subunit 1 (476 aa).

The 217-residue stretch at 25–241 (KSLLRFLTCG…LETVEVQRVV (217 aa)) folds into the tr-type G domain. Residues 34-41 (GSVDDGKS) form a G1 region. 34–41 (GSVDDGKS) serves as a coordination point for GTP. The tract at residues 92 to 96 (GITID) is G2. Residues 113–116 (DTPG) form a G3 region. Residues 113-117 (DTPGH) and 168-171 (NKMD) each bind GTP. The tract at residues 168 to 171 (NKMD) is G4. Residues 206–208 (SAL) form a G5 region.

The protein belongs to the TRAFAC class translation factor GTPase superfamily. Classic translation factor GTPase family. CysN/NodQ subfamily. Heterodimer composed of CysD, the smaller subunit, and CysN.

The catalysed reaction is sulfate + ATP + H(+) = adenosine 5'-phosphosulfate + diphosphate. The protein operates within sulfur metabolism; hydrogen sulfide biosynthesis; sulfite from sulfate: step 1/3. Its function is as follows. With CysD forms the ATP sulfurylase (ATPS) that catalyzes the adenylation of sulfate producing adenosine 5'-phosphosulfate (APS) and diphosphate, the first enzymatic step in sulfur assimilation pathway. APS synthesis involves the formation of a high-energy phosphoric-sulfuric acid anhydride bond driven by GTP hydrolysis by CysN coupled to ATP hydrolysis by CysD. This Erwinia tasmaniensis (strain DSM 17950 / CFBP 7177 / CIP 109463 / NCPPB 4357 / Et1/99) protein is Sulfate adenylyltransferase subunit 1.